The following is a 276-amino-acid chain: Malonyl-[acyl-carrier protein] O-methyltransferase (276 aa).

This sequence belongs to the methyltransferase superfamily.

The enzyme catalyses malonyl-[ACP] + S-adenosyl-L-methionine = malonyl-[ACP] methyl ester + S-adenosyl-L-homocysteine. It functions in the pathway cofactor biosynthesis; biotin biosynthesis. Functionally, converts the free carboxyl group of a malonyl-thioester to its methyl ester by transfer of a methyl group from S-adenosyl-L-methionine (SAM). It allows to synthesize pimeloyl-ACP via the fatty acid synthetic pathway. The sequence is that of Malonyl-[acyl-carrier protein] O-methyltransferase from Paenibacillus sp. (strain JDR-2).